Reading from the N-terminus, the 367-residue chain is Methylthioribose-1-phosphate isomerase (367 aa).

Asp250 acts as the Proton donor in catalysis.

It belongs to the eIF-2B alpha/beta/delta subunits family. MtnA subfamily.

The protein resides in the cytoplasm. It localises to the nucleus. The enzyme catalyses 5-(methylsulfanyl)-alpha-D-ribose 1-phosphate = 5-(methylsulfanyl)-D-ribulose 1-phosphate. It functions in the pathway amino-acid biosynthesis; L-methionine biosynthesis via salvage pathway; L-methionine from S-methyl-5-thio-alpha-D-ribose 1-phosphate: step 1/6. Its function is as follows. Catalyzes the interconversion of methylthioribose-1-phosphate (MTR-1-P) into methylthioribulose-1-phosphate (MTRu-1-P). In Hordeum vulgare (Barley), this protein is Methylthioribose-1-phosphate isomerase (IDI2).